Reading from the N-terminus, the 346-residue chain is tRNA N6-adenosine threonylcarbamoyltransferase (346 aa).

Residues His-111 and His-115 each contribute to the Fe cation site. Residues 134–138 (LVSGG), Asp-167, Gly-180, and Asn-279 contribute to the substrate site. Asp-307 is a Fe cation binding site.

This sequence belongs to the KAE1 / TsaD family. Fe(2+) serves as cofactor.

The protein localises to the cytoplasm. The enzyme catalyses L-threonylcarbamoyladenylate + adenosine(37) in tRNA = N(6)-L-threonylcarbamoyladenosine(37) in tRNA + AMP + H(+). In terms of biological role, required for the formation of a threonylcarbamoyl group on adenosine at position 37 (t(6)A37) in tRNAs that read codons beginning with adenine. Is involved in the transfer of the threonylcarbamoyl moiety of threonylcarbamoyl-AMP (TC-AMP) to the N6 group of A37, together with TsaE and TsaB. TsaD likely plays a direct catalytic role in this reaction. The protein is tRNA N6-adenosine threonylcarbamoyltransferase of Burkholderia cenocepacia (strain ATCC BAA-245 / DSM 16553 / LMG 16656 / NCTC 13227 / J2315 / CF5610) (Burkholderia cepacia (strain J2315)).